We begin with the raw amino-acid sequence, 611 residues long: Dihydroxy-acid dehydratase (611 aa).

D81 lines the Mg(2+) pocket. C122 lines the [2Fe-2S] cluster pocket. Positions 123 and 124 each coordinate Mg(2+). Residue K124 is modified to N6-carboxylysine. C195 lines the [2Fe-2S] cluster pocket. Mg(2+) is bound at residue E491. S517 serves as the catalytic Proton acceptor.

It belongs to the IlvD/Edd family. As to quaternary structure, homodimer. Requires [2Fe-2S] cluster as cofactor. It depends on Mg(2+) as a cofactor.

It catalyses the reaction (2R)-2,3-dihydroxy-3-methylbutanoate = 3-methyl-2-oxobutanoate + H2O. The enzyme catalyses (2R,3R)-2,3-dihydroxy-3-methylpentanoate = (S)-3-methyl-2-oxopentanoate + H2O. It functions in the pathway amino-acid biosynthesis; L-isoleucine biosynthesis; L-isoleucine from 2-oxobutanoate: step 3/4. Its pathway is amino-acid biosynthesis; L-valine biosynthesis; L-valine from pyruvate: step 3/4. In terms of biological role, functions in the biosynthesis of branched-chain amino acids. Catalyzes the dehydration of (2R,3R)-2,3-dihydroxy-3-methylpentanoate (2,3-dihydroxy-3-methylvalerate) into 2-oxo-3-methylpentanoate (2-oxo-3-methylvalerate) and of (2R)-2,3-dihydroxy-3-methylbutanoate (2,3-dihydroxyisovalerate) into 2-oxo-3-methylbutanoate (2-oxoisovalerate), the penultimate precursor to L-isoleucine and L-valine, respectively. This is Dihydroxy-acid dehydratase from Allorhizobium ampelinum (strain ATCC BAA-846 / DSM 112012 / S4) (Agrobacterium vitis (strain S4)).